Here is a 356-residue protein sequence, read N- to C-terminus: Dual-specificity RNA methyltransferase RlmN (356 aa).

The active-site Proton acceptor is E92. The Radical SAM core domain maps to 98-327; sequence EKNRGTLCIS…HQGIRTMTRR (230 aa). C105 and C337 are disulfide-bonded. 3 residues coordinate [4Fe-4S] cluster: C112, C116, and C119. S-adenosyl-L-methionine-binding positions include 162-163, S194, 216-218, and N294; these read GE and SLH. C337 (S-methylcysteine intermediate) is an active-site residue.

It belongs to the radical SAM superfamily. RlmN family. Requires [4Fe-4S] cluster as cofactor.

Its subcellular location is the cytoplasm. It carries out the reaction adenosine(2503) in 23S rRNA + 2 reduced [2Fe-2S]-[ferredoxin] + 2 S-adenosyl-L-methionine = 2-methyladenosine(2503) in 23S rRNA + 5'-deoxyadenosine + L-methionine + 2 oxidized [2Fe-2S]-[ferredoxin] + S-adenosyl-L-homocysteine. The catalysed reaction is adenosine(37) in tRNA + 2 reduced [2Fe-2S]-[ferredoxin] + 2 S-adenosyl-L-methionine = 2-methyladenosine(37) in tRNA + 5'-deoxyadenosine + L-methionine + 2 oxidized [2Fe-2S]-[ferredoxin] + S-adenosyl-L-homocysteine. In terms of biological role, specifically methylates position 2 of adenine 2503 in 23S rRNA and position 2 of adenine 37 in tRNAs. m2A2503 modification seems to play a crucial role in the proofreading step occurring at the peptidyl transferase center and thus would serve to optimize ribosomal fidelity. In Ruthia magnifica subsp. Calyptogena magnifica, this protein is Dual-specificity RNA methyltransferase RlmN.